Reading from the N-terminus, the 670-residue chain is Carnitine O-acetyltransferase, mitochondrial (670 aa).

His378 (proton acceptor) is an active-site residue. CoA is bound by residues Lys461 and 465–472; that span reads KRHGMSPD. Residue Tyr494 coordinates (R)-carnitine. Residue Ser498 participates in CoA binding. Thr507 provides a ligand contact to (R)-carnitine. Position 597 (Gln597) interacts with CoA. The Microbody targeting signal motif lies at 668–670; the sequence is AKL.

The protein belongs to the carnitine/choline acetyltransferase family.

The protein localises to the mitochondrion inner membrane. Its subcellular location is the peroxisome. It catalyses the reaction (R)-carnitine + acetyl-CoA = O-acetyl-(R)-carnitine + CoA. Its function is as follows. Carnitine acetylase is specific for short chain fatty acids. Carnitine acetylase seems to affect the flux through the pyruvate dehydrogenase complex. It may be involved as well in the transport of acetyl-CoA into mitochondria. This is Carnitine O-acetyltransferase, mitochondrial (CAT2) from Saccharomyces cerevisiae (strain ATCC 204508 / S288c) (Baker's yeast).